The primary structure comprises 1368 residues: MQYSFTEKKRIRKSFAKRPIVHQVPFLLATQLESFSTFLQADVPGTQRKPEGLQAAFTSVFPIVSHNGFARLEFVSYALSSPAFNIKECQQRGLTYCSALRAKVRLVILDKESPNKPVVKEVKEQEVYMGEIPLMTPTGSFVINGTERVIVSQLHRSPGVFFEHDKGKTHSSGKLLFSARIIPYRGSWLDFEFDPKDILYFRVDRRRKMPVTILLKAIGLTPEQILANFFVFDNFTLMDEGAQLEFVPERLRGEVARFDITDRDGKVIVQKDKRINAKHIRDLEAAKTKFISVPEDYLLGRVLAKNVVDGDTGEVIASANDEVTESVLEKLREAGIKEIQTLYTNDLDQGPYISSTLRVDETTDKTAARIAIYRMMRPGEPPTEEAVEALFNRLFYSEEAYDLSKVGRMKFNRRVGRDEITGPMTLQDDDILATIKILVELRNGKGEVDDIDHLGNRRVRCVGELAENQFRAGLVRVERAVKERLGQAESENLMPHDLINSKPISSAIREFFGSSQLSQFMDQTNPLSEITHKRRVSALGPGGLTRERAGFEVRDVHPTHYGRVCPIETPEGPNIGLINSLALYAHLNEYGFLETPYRKVVDSKVTDQIDYLSAIEEGRYMIAQANAAIDENGQLVDELVSSREAGETMMVTPDRIQYMDVAPSQIVSVAASLIPFLEHDDANRALMGSNMQRQAVPCLRPEKPVVGTGIERTCAVDSGTTVQAFRGGVVDYVDAGRIVIRVNDDEAVAGEVGVDIYNLIKYTRSNQNTNINQRPIVKMGDKVSRGDVLADGASTDLGELALGQNMLIAFMPWNGYNFEDSILISEKVVADDRYTSIHIEELNVVARDTKLGPEEITRDISNLAEVQLGRLDESGIVYIGAEVEAGDVLVGKVTPKGETQLTPEEKLLRAIFGEKASDVKDTSLRVPSGMSGTVIDVQVFTREGIQRDKRAQQIIDDELKRYRLDLNDQLRIVEGDAFQRLARMLVGKVANGGPKKLAKGTKIDQAYLEDLDHYHWFDIRLADDEAAAQLEAIKNSIEEKRHQFDLAFEEKRKKLTQGDELPPGVLKMVKVYLAVKRRLQPGDKMAGRHGNKGVVSKIVPIEDMPYMADGRPADVVLNPLGVPSRMNVGQVLEVHLGWAAKGLGWRIGEMLQRQAKIEEMRAFLTKIYNDSGRKEDLESFTDDEILELAKNLREGVPFATPVFDGATEEEMGKMLDLAFPDDIAEQLGMNPSKNQVRLYDGRTGEMFERRVTLGYMHYLKLHHLVDDKMHARSTGPYSLVTQQPLGGKAQFGGQRFGEMEVWALEAYGASYVLQEMLTVKSDDVNGRTKVYENLVKGDHVIDAGMPESFNVLVKEIRSLGIDIDLDRN.

The protein belongs to the RNA polymerase beta chain family. The RNAP catalytic core consists of 2 alpha, 1 beta, 1 beta' and 1 omega subunit. When a sigma factor is associated with the core the holoenzyme is formed, which can initiate transcription.

The enzyme catalyses RNA(n) + a ribonucleoside 5'-triphosphate = RNA(n+1) + diphosphate. DNA-dependent RNA polymerase catalyzes the transcription of DNA into RNA using the four ribonucleoside triphosphates as substrates. This chain is DNA-directed RNA polymerase subunit beta, found in Burkholderia ambifaria (strain MC40-6).